The sequence spans 527 residues: Putative ribose/galactose/methyl galactoside import ATP-binding protein 2 (527 aa).

Positions 1–31 (MFTARVARPMAGDDAPAASSGSTGSSAPPAS) are disordered. The span at 12–31 (GDDAPAASSGSTGSSAPPAS) shows a compositional bias: low complexity. ABC transporter domains lie at 38-274 (LEVR…VGRE) and 284-523 (VPIG…RIMD). Residue 70–77 (GENGAGKS) coordinates ATP.

The protein belongs to the ABC transporter superfamily. Carbohydrate importer 2 (CUT2) (TC 3.A.1.2) family.

It localises to the cell inner membrane. It carries out the reaction D-ribose(out) + ATP + H2O = D-ribose(in) + ADP + phosphate + H(+). The catalysed reaction is D-galactose(out) + ATP + H2O = D-galactose(in) + ADP + phosphate + H(+). In terms of biological role, part of an ABC transporter complex involved in carbohydrate import. Could be involved in ribose, galactose and/or methyl galactoside import. Responsible for energy coupling to the transport system. The polypeptide is Putative ribose/galactose/methyl galactoside import ATP-binding protein 2 (Burkholderia lata (strain ATCC 17760 / DSM 23089 / LMG 22485 / NCIMB 9086 / R18194 / 383)).